Reading from the N-terminus, the 310-residue chain is tRNA uridine(34) hydroxylase (310 aa).

The Rhodanese domain occupies 127 to 225 (KDKNTIVVDT…YLEDMSKEES (99 aa)). The Cysteine persulfide intermediate role is filled by Cys185.

This sequence belongs to the TrhO family.

The enzyme catalyses uridine(34) in tRNA + AH2 + O2 = 5-hydroxyuridine(34) in tRNA + A + H2O. Catalyzes oxygen-dependent 5-hydroxyuridine (ho5U) modification at position 34 in tRNAs. This is tRNA uridine(34) hydroxylase from Prochlorococcus marinus subsp. pastoris (strain CCMP1986 / NIES-2087 / MED4).